A 160-amino-acid polypeptide reads, in one-letter code: Cytochrome b6-f complex subunit 4 (160 aa).

A run of 3 helical transmembrane segments spans residues 36 to 56, 95 to 115, and 131 to 151; these read LLYI…GLAV, LLGV…PFLE, and TVFL…TLPI.

The protein belongs to the cytochrome b family. PetD subfamily. The 4 large subunits of the cytochrome b6-f complex are cytochrome b6, subunit IV (17 kDa polypeptide, petD), cytochrome f and the Rieske protein, while the 4 small subunits are petG, petL, petM and petN. The complex functions as a dimer.

The protein resides in the plastid. Its subcellular location is the chloroplast thylakoid membrane. Component of the cytochrome b6-f complex, which mediates electron transfer between photosystem II (PSII) and photosystem I (PSI), cyclic electron flow around PSI, and state transitions. In Daucus carota (Wild carrot), this protein is Cytochrome b6-f complex subunit 4.